The following is a 512-amino-acid chain: Glutathione-binding protein GsiB (512 aa).

Residues 1 to 26 (MARAVHRSGLVALGIATALMASCAFA) form the signal peptide.

This sequence belongs to the bacterial solute-binding protein 5 family. In terms of assembly, the complex is composed of two ATP-binding proteins (GsiA), two transmembrane proteins (GsiC and GsiD) and a solute-binding protein (GsiB). In the presence of glutathione, interacts with the transmembrane proteins GsiC and GsiD.

It is found in the periplasm. In terms of biological role, part of the ABC transporter complex GsiABCD involved in glutathione import. Binds glutathione. This is Glutathione-binding protein GsiB from Escherichia coli (strain K12).